The primary structure comprises 354 residues: Holliday junction branch migration complex subunit RuvB (354 aa).

The large ATPase domain (RuvB-L) stretch occupies residues 4–190 (TDKLAAERII…FGIVARLEFY (187 aa)). ATP contacts are provided by residues L29, R30, G71, K74, T75, T76, 137–139 (EDY), R180, Y190, and R227. Residue T75 coordinates Mg(2+). A small ATPAse domain (RuvB-S) region spans residues 191-261 (DADQLARIVR…VADAALAMLD (71 aa)). The segment at 264–354 (PVGFDLMDRK…RGMWDTPAGK (91 aa)) is head domain (RuvB-H). DNA is bound by residues R300, R319, and R324.

The protein belongs to the RuvB family. As to quaternary structure, homohexamer. Forms an RuvA(8)-RuvB(12)-Holliday junction (HJ) complex. HJ DNA is sandwiched between 2 RuvA tetramers; dsDNA enters through RuvA and exits via RuvB. An RuvB hexamer assembles on each DNA strand where it exits the tetramer. Each RuvB hexamer is contacted by two RuvA subunits (via domain III) on 2 adjacent RuvB subunits; this complex drives branch migration. In the full resolvosome a probable DNA-RuvA(4)-RuvB(12)-RuvC(2) complex forms which resolves the HJ.

The protein localises to the cytoplasm. It carries out the reaction ATP + H2O = ADP + phosphate + H(+). In terms of biological role, the RuvA-RuvB-RuvC complex processes Holliday junction (HJ) DNA during genetic recombination and DNA repair, while the RuvA-RuvB complex plays an important role in the rescue of blocked DNA replication forks via replication fork reversal (RFR). RuvA specifically binds to HJ cruciform DNA, conferring on it an open structure. The RuvB hexamer acts as an ATP-dependent pump, pulling dsDNA into and through the RuvAB complex. RuvB forms 2 homohexamers on either side of HJ DNA bound by 1 or 2 RuvA tetramers; 4 subunits per hexamer contact DNA at a time. Coordinated motions by a converter formed by DNA-disengaged RuvB subunits stimulates ATP hydrolysis and nucleotide exchange. Immobilization of the converter enables RuvB to convert the ATP-contained energy into a lever motion, pulling 2 nucleotides of DNA out of the RuvA tetramer per ATP hydrolyzed, thus driving DNA branch migration. The RuvB motors rotate together with the DNA substrate, which together with the progressing nucleotide cycle form the mechanistic basis for DNA recombination by continuous HJ branch migration. Branch migration allows RuvC to scan DNA until it finds its consensus sequence, where it cleaves and resolves cruciform DNA. The polypeptide is Holliday junction branch migration complex subunit RuvB (Burkholderia ambifaria (strain MC40-6)).